A 590-amino-acid chain; its full sequence is Protein phosphatase PP2A regulatory subunit A (590 aa).

HEAT repeat units lie at residues 12 to 50, 89 to 127, 206 to 244, 246 to 284, 285 to 323, 324 to 362, 363 to 401, 402 to 440, 480 to 518, 519 to 551, and 562 to 590; these read PIAVLIDELKHDEITYRLNALERLSTIALALGPERTRDE, LLSPLENLAATEETVVRDKAVDSLNKVCICLSQEQLEQY, FIPLFNSLSNDDQDSVRLLSFDIMVSLAEVLKSDSEIRH, LLQPLRSFVSDSSWRTRYMVAANFVKLAKVVGPSLIKDE, LIKPFVLLMKDTEQEVRRAIATQIPGFCELLDKRIVLEE, IIPVIQELINDPAQHVRAALGMNIGALAPQLGKEKTTEY, LLPMFLELLKDENPEVRLNIISKLEVVNKVVGIELLSQS, LLPAIVTLAEDKQWRVRLAIIDYIPLLAQQLGVEFFNEK, IIPKFLAMRSHPNYLYRMTTIFAISEIAPALNAEVIEKQ, ILPTLEQLVNDPIPNIRFNVAKAFEVLKPVLAA, and IIPLLEQLTKDNDPDVQYFATQALEQTND.

The protein belongs to the phosphatase 2A regulatory subunit A family. PP2A exists in several trimeric forms, all of which consist of a core composed of a catalytic subunit associated with a 65 kDa (PR65) (Subunit A) and a 55 kDa (PR55) (Subunit B) regulatory subunit.

Its function is as follows. Phosphatase 2A affects a variety of biological processes in the cell such as transcription, cell cycle progression and cellular morphogenesis, and provides an initial identification of critical substrates for this phosphatase. The regulatory subunit may direct the catalytic subunit to distinct, albeit overlapping, subsets of substrates. The protein is Protein phosphatase PP2A regulatory subunit A (paa1) of Schizosaccharomyces pombe (strain 972 / ATCC 24843) (Fission yeast).